The primary structure comprises 706 residues: Ribosomal RNA large subunit methyltransferase K/L (706 aa).

A THUMP domain is found at leucine 43–leucine 154.

This sequence belongs to the methyltransferase superfamily. RlmKL family.

It is found in the cytoplasm. The enzyme catalyses guanosine(2445) in 23S rRNA + S-adenosyl-L-methionine = N(2)-methylguanosine(2445) in 23S rRNA + S-adenosyl-L-homocysteine + H(+). The catalysed reaction is guanosine(2069) in 23S rRNA + S-adenosyl-L-methionine = N(2)-methylguanosine(2069) in 23S rRNA + S-adenosyl-L-homocysteine + H(+). Functionally, specifically methylates the guanine in position 2445 (m2G2445) and the guanine in position 2069 (m7G2069) of 23S rRNA. The chain is Ribosomal RNA large subunit methyltransferase K/L from Yersinia enterocolitica serotype O:8 / biotype 1B (strain NCTC 13174 / 8081).